The sequence spans 405 residues: Arginine deiminase (405 aa).

C395 functions as the Amidino-cysteine intermediate in the catalytic mechanism.

The protein belongs to the arginine deiminase family.

Its subcellular location is the cytoplasm. It catalyses the reaction L-arginine + H2O = L-citrulline + NH4(+). It functions in the pathway amino-acid degradation; L-arginine degradation via ADI pathway; carbamoyl phosphate from L-arginine: step 1/2. The chain is Arginine deiminase from Rhodococcus opacus (strain B4).